We begin with the raw amino-acid sequence, 206 residues long: Urease accessory protein UreG (206 aa).

14–21 contributes to the GTP binding site; sequence GPVGSGKT.

Belongs to the SIMIBI class G3E GTPase family. UreG subfamily. In terms of assembly, homodimer. UreD, UreF and UreG form a complex that acts as a GTP-hydrolysis-dependent molecular chaperone, activating the urease apoprotein by helping to assemble the nickel containing metallocenter of UreC. The UreE protein probably delivers the nickel.

The protein resides in the cytoplasm. Functionally, facilitates the functional incorporation of the urease nickel metallocenter. This process requires GTP hydrolysis, probably effectuated by UreG. The sequence is that of Urease accessory protein UreG from Methylocella silvestris (strain DSM 15510 / CIP 108128 / LMG 27833 / NCIMB 13906 / BL2).